Consider the following 101-residue polypeptide: Urease subunit beta (101 aa).

Belongs to the urease beta subunit family. Heterotrimer of UreA (gamma), UreB (beta) and UreC (alpha) subunits. Three heterotrimers associate to form the active enzyme.

The protein resides in the cytoplasm. The catalysed reaction is urea + 2 H2O + H(+) = hydrogencarbonate + 2 NH4(+). It participates in nitrogen metabolism; urea degradation; CO(2) and NH(3) from urea (urease route): step 1/1. The sequence is that of Urease subunit beta from Burkholderia orbicola (strain MC0-3).